Consider the following 281-residue polypeptide: 1-acyl-sn-glycerol-3-phosphate acyltransferase (281 aa).

3 consecutive transmembrane segments (helical) span residues 40-60 (IFVC…IMVL), 71-91 (LGNL…GIPI), and 110-130 (ASPI…VGVA). Residues 109 to 114 (HASPID) carry the HXXXXD motif motif.

This sequence belongs to the 1-acyl-sn-glycerol-3-phosphate acyltransferase family.

It is found in the membrane. It catalyses the reaction a 1-acyl-sn-glycero-3-phosphate + an acyl-CoA = a 1,2-diacyl-sn-glycero-3-phosphate + CoA. Its pathway is phospholipid metabolism; CDP-diacylglycerol biosynthesis; CDP-diacylglycerol from sn-glycerol 3-phosphate: step 2/3. Converts lysophosphatidic acid (LPA) into phosphatidic acid by incorporating acyl moiety at the 2 position. This enzyme uses erucoyl-CoA as an acyl donor. This chain is 1-acyl-sn-glycerol-3-phosphate acyltransferase, found in Limnanthes alba (White meadowfoam).